We begin with the raw amino-acid sequence, 347 residues long: Leucine-rich repeat-containing protein 69 (347 aa).

LRR repeat units lie at residues 15 to 37, 38 to 60, 61 to 82, 84 to 105, 108 to 129, 131 to 152, 154 to 175, 177 to 198, and 200 to 222; these read NTKI…EKLP, NLKT…RTLT, QLTL…IKYL, SLKN…VFNG, RLIM…IGRL, SLTY…LCSL, HLSE…IKFL, NLQQ…ICHL, and KLRV…QNLR.

The protein belongs to the LRRC69 family.

The protein is Leucine-rich repeat-containing protein 69 (Lrrc69) of Mus musculus (Mouse).